A 60-amino-acid chain; its full sequence is Phycobilisome degradation protein NblA homolog 2 (60 aa).

The protein to Synechococcus PCC 7942 NblA and some, to chloroplast ycf18.

The polypeptide is Phycobilisome degradation protein NblA homolog 2 (Synechocystis sp. (strain ATCC 27184 / PCC 6803 / Kazusa)).